We begin with the raw amino-acid sequence, 215 residues long: MSAEQEKKTQGTTKEEQKSSFASEDVASKQTEEAKAVFGDGVAKQENKSGASTNDEKKPAEGDEDAEPASPEVHFEPIVKLSAVETKTNEEEETVEFKMRAKLFRFDKAASEWKERGTGDARLLKHKETGKTRLVMRRDKTLKVCANHLLMPEMKLTPNVGSDRSWVWTVAADVSEGEPTAETFAIRFANSENANLFKENFEKYQEENAKILKKN.

Basic and acidic residues-rich tracts occupy residues 1–18 (MSAEQEKKTQGTTKEEQK) and 26–35 (VASKQTEEAK). Positions 1–78 (MSAEQEKKTQ…ASPEVHFEPI (78 aa)) are disordered. Ser-70 carries the phosphoserine modification. In terms of domain architecture, RanBD1 spans 74-210 (HFEPIVKLSA…FEKYQEENAK (137 aa)).

This sequence belongs to the RANBP1 family.

The protein localises to the cytoplasm. Stimulates the GTPase activity in the presence of RNA1. May potentiate the action of RanGAP1 (RNA1), thus playing the role of a negative regulator. This is Ran-specific GTPase-activating protein 1 (sbp1) from Schizosaccharomyces pombe (strain 972 / ATCC 24843) (Fission yeast).